The sequence spans 366 residues: Ribosomal RNA large subunit methyltransferase M (366 aa).

S-adenosyl-L-methionine is bound by residues Ser188, 221–224 (CPGG), Asp240, Asp260, and Asp277. Lys306 acts as the Proton acceptor in catalysis.

This sequence belongs to the class I-like SAM-binding methyltransferase superfamily. RNA methyltransferase RlmE family. RlmM subfamily. As to quaternary structure, monomer.

It localises to the cytoplasm. It catalyses the reaction cytidine(2498) in 23S rRNA + S-adenosyl-L-methionine = 2'-O-methylcytidine(2498) in 23S rRNA + S-adenosyl-L-homocysteine + H(+). Catalyzes the 2'-O-methylation at nucleotide C2498 in 23S rRNA. This Pectobacterium carotovorum subsp. carotovorum (strain PC1) protein is Ribosomal RNA large subunit methyltransferase M.